A 207-amino-acid polypeptide reads, in one-letter code: Probable GTP-binding protein EngB (207 aa).

The EngB-type G domain occupies 22–194 (DLPEIAFAGR…WRRIEEVLPA (173 aa)). Residues 30–37 (GRSNVGKS), 57–61 (GRTQL), 75–78 (DLPG), 142–145 (TKCD), and 173–175 (FSA) each bind GTP. Positions 37 and 59 each coordinate Mg(2+).

Belongs to the TRAFAC class TrmE-Era-EngA-EngB-Septin-like GTPase superfamily. EngB GTPase family. Mg(2+) serves as cofactor.

Its function is as follows. Necessary for normal cell division and for the maintenance of normal septation. The sequence is that of Probable GTP-binding protein EngB from Geotalea daltonii (strain DSM 22248 / JCM 15807 / FRC-32) (Geobacter daltonii).